Here is a 200-residue protein sequence, read N- to C-terminus: ATP synthase subunit b (200 aa).

A helical membrane pass occupies residues 12–32 (ILSGLAVAVAILVPVLALASG).

This sequence belongs to the ATPase B chain family. F-type ATPases have 2 components, F(1) - the catalytic core - and F(0) - the membrane proton channel. F(1) has five subunits: alpha(3), beta(3), gamma(1), delta(1), epsilon(1). F(0) has three main subunits: a(1), b(2) and c(10-14). The alpha and beta chains form an alternating ring which encloses part of the gamma chain. F(1) is attached to F(0) by a central stalk formed by the gamma and epsilon chains, while a peripheral stalk is formed by the delta and b chains.

The protein resides in the cell inner membrane. Its function is as follows. F(1)F(0) ATP synthase produces ATP from ADP in the presence of a proton or sodium gradient. F-type ATPases consist of two structural domains, F(1) containing the extramembraneous catalytic core and F(0) containing the membrane proton channel, linked together by a central stalk and a peripheral stalk. During catalysis, ATP synthesis in the catalytic domain of F(1) is coupled via a rotary mechanism of the central stalk subunits to proton translocation. Component of the F(0) channel, it forms part of the peripheral stalk, linking F(1) to F(0). The chain is ATP synthase subunit b from Trichlorobacter lovleyi (strain ATCC BAA-1151 / DSM 17278 / SZ) (Geobacter lovleyi).